Reading from the N-terminus, the 164-residue chain is Pyruvoyl-dependent arginine decarboxylase (164 aa).

Ser52 carries the post-translational modification Pyruvic acid (Ser).

This sequence belongs to the PdaD family. Pyruvate is required as a cofactor.

The catalysed reaction is L-arginine + H(+) = agmatine + CO2. In Methanococcus maripaludis (strain C7 / ATCC BAA-1331), this protein is Pyruvoyl-dependent arginine decarboxylase.